The following is a 768-amino-acid chain: 5-methyltetrahydropteroyltriglutamate--homocysteine methyltransferase (768 aa).

5-methyltetrahydropteroyltri-L-glutamate contacts are provided by residues 17-20 and Lys-113; that span reads REWK. L-homocysteine contacts are provided by residues 440–442 and Glu-493; that span reads IGS. L-methionine is bound by residues 440–442 and Glu-493; that span reads IGS. A 5-methyltetrahydropteroyltri-L-glutamate-binding site is contributed by Trp-570. Position 608 (Asp-608) interacts with L-homocysteine. Asp-608 contributes to the L-methionine binding site. Glu-614 contributes to the 5-methyltetrahydropteroyltri-L-glutamate binding site. Zn(2+) is bound by residues His-650, Cys-652, and Glu-674. Catalysis depends on His-703, which acts as the Proton donor. Cys-735 serves as a coordination point for Zn(2+).

Belongs to the vitamin-B12 independent methionine synthase family. Zn(2+) serves as cofactor.

It carries out the reaction 5-methyltetrahydropteroyltri-L-glutamate + L-homocysteine = tetrahydropteroyltri-L-glutamate + L-methionine. The protein operates within amino-acid biosynthesis; L-methionine biosynthesis via de novo pathway; L-methionine from L-homocysteine (MetE route): step 1/1. Catalyzes the transfer of a methyl group from 5-methyltetrahydrofolate to homocysteine resulting in methionine formation. The sequence is that of 5-methyltetrahydropteroyltriglutamate--homocysteine methyltransferase from Lactiplantibacillus plantarum (strain ATCC BAA-793 / NCIMB 8826 / WCFS1) (Lactobacillus plantarum).